Consider the following 99-residue polypeptide: UPF0235 protein ASA_3628 (99 aa).

The protein belongs to the UPF0235 family.

This chain is UPF0235 protein ASA_3628, found in Aeromonas salmonicida (strain A449).